Consider the following 187-residue polypeptide: Cerebral dopamine neurotrophic factor (187 aa).

Positions 1–24 are cleaved as a signal peptide; the sequence is MRCTSPAALVTFCAGLWISNHVLA. Cystine bridges form between Cys-37/Cys-124, Cys-40/Cys-113, and Cys-71/Cys-82.

It belongs to the ARMET family.

It localises to the secreted. Functionally, trophic factor for dopamine neurons. Prevents the 6-hydroxydopamine (6-OHDA)-induced degeneration of dopaminergic neurons. When administered after 6-OHDA-lesioning, restores the dopaminergic function and prevents the degeneration of dopaminergic neurons in substantia nigra. In Rattus norvegicus (Rat), this protein is Cerebral dopamine neurotrophic factor (Cdnf).